The sequence spans 58 residues: Small ribosomal subunit protein bS21 (58 aa).

Positions 34–58 (KREHYESPSVRRKKKSEAARRRKRR) are disordered. Basic residues predominate over residues 43 to 58 (VRRKKKSEAARRRKRR).

This sequence belongs to the bacterial ribosomal protein bS21 family.

In Caldicellulosiruptor bescii (strain ATCC BAA-1888 / DSM 6725 / KCTC 15123 / Z-1320) (Anaerocellum thermophilum), this protein is Small ribosomal subunit protein bS21.